The sequence spans 152 residues: UPF0266 membrane protein YobD (152 aa).

Transmembrane regions (helical) follow at residues 6 to 26 (LVLI…QFIM), 45 to 65 (IDSV…VTNH), and 67 to 87 (ALIT…IFWI).

The protein belongs to the UPF0266 family.

It localises to the cell inner membrane. This is UPF0266 membrane protein YobD from Shigella boydii serotype 18 (strain CDC 3083-94 / BS512).